Consider the following 579-residue polypeptide: F-box protein At5g39450 (579 aa).

Positions 16–62 (TCLLLSLPEDVIAVIARFVSPRDICNLSLCCKSLCDVVDSERIWLVQ) constitute an F-box domain.

In Arabidopsis thaliana (Mouse-ear cress), this protein is F-box protein At5g39450.